We begin with the raw amino-acid sequence, 405 residues long: Phosphatidylinositol 5-phosphate 4-kinase type-2 alpha (405 aa).

Residues 32 to 404 (ASDPLLSVLM…RFLDFIANIL (373 aa)) form the PIPK domain. A disordered region spans residues 287 to 326 (QEEVECEENDGEDEGESDGTHPIGTPPDSPGNTLNSSLPL). Acidic residues predominate over residues 288 to 303 (EEVECEENDGEDEGES).

Homodimer. Post-translationally, phosphorylated in tyrosines. Phosphorylation is induced by light and increases kinase activity.

The protein resides in the cell membrane. The protein localises to the nucleus. It localises to the lysosome. Its subcellular location is the cytoplasm. The catalysed reaction is a 1,2-diacyl-sn-glycero-3-phospho-(1D-myo-inositol-5-phosphate) + ATP = a 1,2-diacyl-sn-glycero-3-phospho-(1D-myo-inositol-4,5-bisphosphate) + ADP + H(+). The enzyme catalyses 1,2-dihexadecanoyl-sn-glycero-3-phospho-(1D-myo-inositol-5-phosphate) + ATP = 1,2-dihexadecanoyl-sn-glycero-3-phospho-(1D-myo-inositol-4,5-bisphosphate) + ADP + H(+). It catalyses the reaction 1,2-dihexadecanoyl-sn-glycero-3-phospho-(1D-myo-inositol-5-phosphate) + GTP = 1,2-dihexadecanoyl-sn-glycero-3-phospho-(1D-myo-inositol-4,5-bisphosphate) + GDP + H(+). With respect to regulation, in rod outer segments, activated by light. Its function is as follows. Catalyzes the phosphorylation of phosphatidylinositol 5-phosphate (PtdIns5P) on the fourth hydroxyl of the myo-inositol ring, to form phosphatidylinositol 4,5-bisphosphate (PtdIns(4,5)P2). Has both ATP- and GTP-dependent kinase activities. This is Phosphatidylinositol 5-phosphate 4-kinase type-2 alpha (PIP4K2A) from Gallus gallus (Chicken).